A 32-amino-acid chain; its full sequence is Cytochrome b6-f complex subunit 6 (32 aa).

A helical membrane pass occupies residues Ile-4–Thr-26.

This sequence belongs to the PetL family. In terms of assembly, the 4 large subunits of the cytochrome b6-f complex are cytochrome b6, subunit IV (17 kDa polypeptide, PetD), cytochrome f and the Rieske protein, while the 4 small subunits are PetG, PetL, PetM and PetN. The complex functions as a dimer.

The protein resides in the plastid. It localises to the chloroplast thylakoid membrane. Its function is as follows. Component of the cytochrome b6-f complex, which mediates electron transfer between photosystem II (PSII) and photosystem I (PSI), cyclic electron flow around PSI, and state transitions. PetL is important for photoautotrophic growth as well as for electron transfer efficiency and stability of the cytochrome b6-f complex. The sequence is that of Cytochrome b6-f complex subunit 6 from Tetradesmus obliquus (Green alga).